Consider the following 176-residue polypeptide: Large ribosomal subunit protein bL28m (176 aa).

The transit peptide at 1 to 8 directs the protein to the mitochondrion; sequence MASKLLRK.

This sequence belongs to the bacterial ribosomal protein bL28 family. Component of the mitochondrial large ribosomal subunit (mt-LSU). Mature yeast 74S mitochondrial ribosomes consist of a small (37S) and a large (54S) subunit. The 37S small subunit contains a 15S ribosomal RNA (15S mt-rRNA) and at least 32 different proteins. The 54S large subunit contains a 21S rRNA (21S mt-rRNA) and at least 45 different proteins.

The protein resides in the cytoplasm. It localises to the mitochondrion. Functionally, component of the mitochondrial ribosome (mitoribosome), a dedicated translation machinery responsible for the synthesis of mitochondrial genome-encoded proteins, including at least some of the essential transmembrane subunits of the mitochondrial respiratory chain. The mitoribosomes are attached to the mitochondrial inner membrane and translation products are cotranslationally integrated into the membrane. This is Large ribosomal subunit protein bL28m (mrpl24) from Schizosaccharomyces pombe (strain 972 / ATCC 24843) (Fission yeast).